A 68-amino-acid chain; its full sequence is Bacteriocin lactococcin-B (68 aa).

Residues 1–21 constitute a propeptide that is removed on maturation; that stretch reads MKNQLNFNIVSDEELAEVNGG.

It is found in the secreted. In terms of biological role, kills Lactococci by dissipating the membrane potential of the cells. The protein is Bacteriocin lactococcin-B (lcnB) of Lactococcus lactis subsp. cremoris (Streptococcus cremoris).